Consider the following 352-residue polypeptide: Phospho-N-acetylmuramoyl-pentapeptide-transferase (352 aa).

10 helical membrane passes run 10-30 (YMFF…ALFL), 67-87 (TMGG…CADL), 88-108 (NNFY…IGLV), 129-149 (LLSQ…MGIN), 159-179 (YALF…IISS), 191-211 (GLAT…LYLS), 227-247 (GLGE…GFLW), 255-275 (VFMG…LGIV), 280-300 (ILLL…ILQV), and 329-349 (KIIV…LISI).

The protein belongs to the glycosyltransferase 4 family. MraY subfamily. It depends on Mg(2+) as a cofactor.

It is found in the cell inner membrane. It catalyses the reaction UDP-N-acetyl-alpha-D-muramoyl-L-alanyl-gamma-D-glutamyl-meso-2,6-diaminopimeloyl-D-alanyl-D-alanine + di-trans,octa-cis-undecaprenyl phosphate = di-trans,octa-cis-undecaprenyl diphospho-N-acetyl-alpha-D-muramoyl-L-alanyl-D-glutamyl-meso-2,6-diaminopimeloyl-D-alanyl-D-alanine + UMP. The protein operates within cell wall biogenesis; peptidoglycan biosynthesis. Catalyzes the initial step of the lipid cycle reactions in the biosynthesis of the cell wall peptidoglycan: transfers peptidoglycan precursor phospho-MurNAc-pentapeptide from UDP-MurNAc-pentapeptide onto the lipid carrier undecaprenyl phosphate, yielding undecaprenyl-pyrophosphoryl-MurNAc-pentapeptide, known as lipid I. This is Phospho-N-acetylmuramoyl-pentapeptide-transferase from Campylobacter lari (strain RM2100 / D67 / ATCC BAA-1060).